A 115-amino-acid chain; its full sequence is Large ribosomal subunit protein uL22 (115 aa).

Belongs to the universal ribosomal protein uL22 family. Part of the 50S ribosomal subunit.

This protein binds specifically to 23S rRNA; its binding is stimulated by other ribosomal proteins, e.g. L4, L17, and L20. It is important during the early stages of 50S assembly. It makes multiple contacts with different domains of the 23S rRNA in the assembled 50S subunit and ribosome. Its function is as follows. The globular domain of the protein is located near the polypeptide exit tunnel on the outside of the subunit, while an extended beta-hairpin is found that lines the wall of the exit tunnel in the center of the 70S ribosome. This chain is Large ribosomal subunit protein uL22, found in Enterococcus faecalis (strain ATCC 700802 / V583).